A 467-amino-acid chain; its full sequence is Methylenetetrahydrofolate--tRNA-(uracil-5-)-methyltransferase TrmFO (467 aa).

Residue 10–15 coordinates FAD; the sequence is GGGMAG.

This sequence belongs to the MnmG family. TrmFO subfamily. FAD is required as a cofactor.

It is found in the cytoplasm. It catalyses the reaction uridine(54) in tRNA + (6R)-5,10-methylene-5,6,7,8-tetrahydrofolate + NADH + H(+) = 5-methyluridine(54) in tRNA + (6S)-5,6,7,8-tetrahydrofolate + NAD(+). It carries out the reaction uridine(54) in tRNA + (6R)-5,10-methylene-5,6,7,8-tetrahydrofolate + NADPH + H(+) = 5-methyluridine(54) in tRNA + (6S)-5,6,7,8-tetrahydrofolate + NADP(+). Functionally, catalyzes the folate-dependent formation of 5-methyl-uridine at position 54 (M-5-U54) in all tRNAs. The protein is Methylenetetrahydrofolate--tRNA-(uracil-5-)-methyltransferase TrmFO of Hyphomonas neptunium (strain ATCC 15444).